Here is a 1076-residue protein sequence, read N- to C-terminus: Nickel-cobalt-cadmium resistance protein NccA (1076 aa).

12 consecutive transmembrane segments (helical) span residues 14-34 (WLVLFLTAVVGAIGAWQLNLL), 367-387 (VAKNLVEGAALVVVILFALLG), 391-411 (AAVIAALVIPLSLLISAIGMN), 419-439 (LMSLGALDFGLIIDGAVIIVE), 476-496 (TVYGQLVIFMVFLPCLTFQGV), 503-523 (PMVITLMLALASAFVLSLTFV), 562-582 (MPFLGAALVTLALAAMAFTFV), 904-924 (LAIIVPLCFILIAATLYMAIG), 929-949 (TATVLTAVPLALAGGVFALVL), 960-980 (VGFIAVSGVAVLNGLVLISAI), 1004-1024 (PVLMTALVASLGFVPMAIATG), and 1036-1056 (VVIGGLITATVLTLFVLPAVC).

It belongs to the resistance-nodulation-cell division (RND) (TC 2.A.6) family.

It is found in the cell membrane. Its function is as follows. Component of the NCC cation-efflux system that confers resistance to nickel, cobalt and cadmium. May form a membrane tunnel, which allows ion transport across the membrane. The chain is Nickel-cobalt-cadmium resistance protein NccA (nccA) from Alcaligenes xylosoxydans xylosoxydans (Achromobacter xylosoxidans).